Reading from the N-terminus, the 219-residue chain is Nodulation protein NolA (219 aa).

Residues arginine 10–glycine 79 enclose the HTH merR-type domain. The H-T-H motif DNA-binding region spans isoleucine 13 to histidine 32.

Its function is as follows. Involved in genotype-specific nodulation of soybeans. This chain is Nodulation protein NolA (nolA), found in Bradyrhizobium elkanii.